The chain runs to 212 residues: Probable chemoreceptor glutamine deamidase CheD (212 aa).

Belongs to the CheD family.

It catalyses the reaction L-glutaminyl-[protein] + H2O = L-glutamyl-[protein] + NH4(+). Functionally, probably deamidates glutamine residues to glutamate on methyl-accepting chemotaxis receptors (MCPs), playing an important role in chemotaxis. This chain is Probable chemoreceptor glutamine deamidase CheD, found in Oleidesulfovibrio alaskensis (strain ATCC BAA-1058 / DSM 17464 / G20) (Desulfovibrio alaskensis).